A 184-amino-acid polypeptide reads, in one-letter code: Probable chemoreceptor glutamine deamidase CheD (184 aa).

This sequence belongs to the CheD family.

It catalyses the reaction L-glutaminyl-[protein] + H2O = L-glutamyl-[protein] + NH4(+). Functionally, probably deamidates glutamine residues to glutamate on methyl-accepting chemotaxis receptors (MCPs), playing an important role in chemotaxis. The chain is Probable chemoreceptor glutamine deamidase CheD from Rhizobium johnstonii (strain DSM 114642 / LMG 32736 / 3841) (Rhizobium leguminosarum bv. viciae).